Reading from the N-terminus, the 316-residue chain is RNA interference defective protein 11 (316 aa).

The RING-type; degenerate zinc-finger motif lies at 183–218 (CYINFNCQTSKVMFGCGHVYCEQCLNSWNDKPCSVC).

In terms of assembly, interacts (via RING-type zinc finger domain) with rde-10.

In terms of biological role, in complex with rde-10, required in the endogenous and exogenous siRNA pathway for biogenesis and accumulation of secondary small interfering RNA (siRNA) intermediates, such as 22G-siRNAs derived from ergo-1 targets. This Caenorhabditis elegans protein is RNA interference defective protein 11.